The primary structure comprises 141 residues: Large ribosomal subunit protein uL11 (141 aa).

The protein belongs to the universal ribosomal protein uL11 family. Part of the ribosomal stalk of the 50S ribosomal subunit. Interacts with L10 and the large rRNA to form the base of the stalk. L10 forms an elongated spine to which L12 dimers bind in a sequential fashion forming a multimeric L10(L12)X complex. One or more lysine residues are methylated.

In terms of biological role, forms part of the ribosomal stalk which helps the ribosome interact with GTP-bound translation factors. The sequence is that of Large ribosomal subunit protein uL11 from Nostoc sp. (strain PCC 7120 / SAG 25.82 / UTEX 2576).